The following is a 151-amino-acid chain: Epigen (151 aa).

The N-terminal stretch at 1-18 is a signal peptide; that stretch reads MAFGMLIYILLKAMGALS. Topologically, residues 19 to 108 are extracellular; it reads EEAALTASSL…NSYAHNSYER (90 aa). Asparagine 39 carries N-linked (GlcNAc...) asparagine glycosylation. Residues 54–94 form the EGF-like domain; that stretch reads LMQTCLEEHHSYCINGLCAFHSELRKPICKCLAGYNGERCE. 3 cysteine pairs are disulfide-bonded: cysteine 58-cysteine 71, cysteine 66-cysteine 82, and cysteine 84-cysteine 93. The chain crosses the membrane as a helical span at residues 109–129; the sequence is YIAVGIGIGILTSGILAIIYC. Residues 130 to 151 are Cytoplasmic-facing; sequence YVRKRCRKLKSPYKVCMGETAL.

The protein localises to the membrane. In terms of biological role, promotes the growth of epithelial cells. The polypeptide is Epigen (EPGN) (Gallus gallus (Chicken)).